The sequence spans 45 residues: Defensin Tk-AMP-D4 (45 aa).

Cystine bridges form between Cys-3–Cys-45, Cys-14–Cys-34, Cys-20–Cys-39, and Cys-24–Cys-41.

Functionally, plant defense peptide. This is Defensin Tk-AMP-D4 from Triticum kiharae (Wheat).